Here is a 212-residue protein sequence, read N- to C-terminus: Imidazole glycerol phosphate synthase subunit HisH (212 aa).

Positions 4–210 (NIGIIDYGMG…LKWLHEKNSD (207 aa)) constitute a Glutamine amidotransferase type-1 domain. The active-site Nucleophile is C82. Active-site residues include H185 and E187.

Heterodimer of HisH and HisF.

It localises to the cytoplasm. The catalysed reaction is 5-[(5-phospho-1-deoxy-D-ribulos-1-ylimino)methylamino]-1-(5-phospho-beta-D-ribosyl)imidazole-4-carboxamide + L-glutamine = D-erythro-1-(imidazol-4-yl)glycerol 3-phosphate + 5-amino-1-(5-phospho-beta-D-ribosyl)imidazole-4-carboxamide + L-glutamate + H(+). It carries out the reaction L-glutamine + H2O = L-glutamate + NH4(+). It participates in amino-acid biosynthesis; L-histidine biosynthesis; L-histidine from 5-phospho-alpha-D-ribose 1-diphosphate: step 5/9. Its function is as follows. IGPS catalyzes the conversion of PRFAR and glutamine to IGP, AICAR and glutamate. The HisH subunit catalyzes the hydrolysis of glutamine to glutamate and ammonia as part of the synthesis of IGP and AICAR. The resulting ammonia molecule is channeled to the active site of HisF. The sequence is that of Imidazole glycerol phosphate synthase subunit HisH from Prochlorococcus marinus (strain MIT 9211).